A 1148-amino-acid chain; its full sequence is Ice nucleation protein (1148 aa).

Disordered stretches follow at residues 110–131, 222–256, and 367–394; these read ADPA…PTAI, YGST…GYGS, and GSTQ…GSNL. Residues 114–128 show a composition bias toward low complexity; it reads STSTSTSTSTLTPMP. The segment at 180-1099 is octapeptide periodicity; the sequence is ATYGSTLSGD…LSAGEDSTLI (920 aa). Over residues 230–250 the composition is skewed to polar residues; it reads EDSSLTAGYGSTQTAQEGSNL.

Belongs to the bacterial ice nucleation protein family.

Its subcellular location is the cell outer membrane. Functionally, ice nucleation proteins enable bacteria to nucleate crystallization in supercooled water. This Pseudomonas syringae protein is Ice nucleation protein (inaK).